The chain runs to 529 residues: CTP synthase (529 aa).

The tract at residues M1–L270 is amidoligase domain. S12 is a binding site for CTP. Residue S12 participates in UTP binding. Residues G13–I18 and D70 each bind ATP. D70 and E145 together coordinate Mg(2+). Residues D152–E154, K191–Q196, and K227 contribute to the CTP site. UTP is bound by residues K191–Q196 and K227. K243 to A245 contributes to the ATP binding site. The region spanning V293–S525 is the Glutamine amidotransferase type-1 domain. G349 contacts L-glutamine. C376 serves as the catalytic Nucleophile; for glutamine hydrolysis. L-glutamine-binding positions include L377–Q380, E400, and R455. Residues H498 and E500 contribute to the active site.

The protein belongs to the CTP synthase family. As to quaternary structure, homotetramer.

It catalyses the reaction UTP + L-glutamine + ATP + H2O = CTP + L-glutamate + ADP + phosphate + 2 H(+). The catalysed reaction is L-glutamine + H2O = L-glutamate + NH4(+). The enzyme catalyses UTP + NH4(+) + ATP = CTP + ADP + phosphate + 2 H(+). It participates in pyrimidine metabolism; CTP biosynthesis via de novo pathway; CTP from UDP: step 2/2. With respect to regulation, allosterically activated by GTP, when glutamine is the substrate; GTP has no effect on the reaction when ammonia is the substrate. The allosteric effector GTP functions by stabilizing the protein conformation that binds the tetrahedral intermediate(s) formed during glutamine hydrolysis. Inhibited by the product CTP, via allosteric rather than competitive inhibition. Catalyzes the ATP-dependent amination of UTP to CTP with either L-glutamine or ammonia as the source of nitrogen. Regulates intracellular CTP levels through interactions with the four ribonucleotide triphosphates. This is CTP synthase from Methanoculleus marisnigri (strain ATCC 35101 / DSM 1498 / JR1).